We begin with the raw amino-acid sequence, 362 residues long: Peptide chain release factor 1 (362 aa).

Gln-236 bears the N5-methylglutamine mark.

Belongs to the prokaryotic/mitochondrial release factor family. Post-translationally, methylated by PrmC. Methylation increases the termination efficiency of RF1.

Its subcellular location is the cytoplasm. Functionally, peptide chain release factor 1 directs the termination of translation in response to the peptide chain termination codons UAG and UAA. This Lactobacillus helveticus (strain DPC 4571) protein is Peptide chain release factor 1.